The chain runs to 302 residues: Acetylxylan esterase (302 aa).

Positions 1–20 are cleaved as a signal peptide; it reads MPSVKETLTLLLSQAFLATG. A propeptide spanning residues 21–31 is cleaved from the precursor; the sequence is SPVDGETVVKR. Gln32 is subject to Pyrrolidone carboxylic acid. Asn94 carries N-linked (GlcNAc...) asparagine glycosylation. Ser121 is an active-site residue. The tract at residues 236–273 is disordered; that stretch reads QLSSGGSQPPGGGPTSTSRPTSTRTGSSPGPTQTHWGQ. The interval 244–266 is linker; that stretch reads PPGGGPTSTSRPTSTRTGSSPGP. Over residues 250–269 the composition is skewed to low complexity; sequence TSTSRPTSTRTGSSPGPTQT. The CBM1 domain maps to 266 to 302; the sequence is PTQTHWGQCGGQGWTGPTQCESGTTCQVISQWYSQCL. Intrachain disulfides connect Cys274–Cys291 and Cys285–Cys301.

Belongs to the cutinase family. Acetylxylan esterase subfamily. In terms of assembly, monomer. Glycosylated.

It localises to the secreted. The enzyme catalyses Deacetylation of xylans and xylo-oligosaccharides.. Its pathway is glycan degradation; xylan degradation. Its activity is regulated as follows. Inhibited by phenylmethylsulfonyl flouride. Functionally, degrades acetylated xylans by cleaving acetyl side groups from the hetero-xylan backbone. This chain is Acetylxylan esterase (axe1), found in Hypocrea jecorina (Trichoderma reesei).